The chain runs to 557 residues: Formate--tetrahydrofolate ligase (557 aa).

Residue threonine 65 to threonine 72 participates in ATP binding.

It belongs to the formate--tetrahydrofolate ligase family.

It catalyses the reaction (6S)-5,6,7,8-tetrahydrofolate + formate + ATP = (6R)-10-formyltetrahydrofolate + ADP + phosphate. It participates in one-carbon metabolism; tetrahydrofolate interconversion. This Methylorubrum populi (strain ATCC BAA-705 / NCIMB 13946 / BJ001) (Methylobacterium populi) protein is Formate--tetrahydrofolate ligase.